The following is a 674-amino-acid chain: Leucine-rich repeat transmembrane protein FLRT1 (674 aa).

The N-terminal stretch at 1 to 51 is a signal peptide; sequence MVVAHSAATATTTPAATVTATVVMTTATMDLRDWLFLCYGLIAFLTEVIDS. Residues 52–552 are Extracellular-facing; the sequence is TTCPSVCRCD…QNAGPMAGLP (501 aa). 2 cysteine pairs are disulfide-bonded: cysteine 54–cysteine 60 and cysteine 58–cysteine 67. Residues 54-80 enclose the LRRNT domain; sequence CPSVCRCDNGFIYCNDRGLTSIPSDIP. LRR repeat units lie at residues 81 to 105, 106 to 126, 127 to 149, 151 to 175, 176 to 197, 198 to 220, 222 to 246, 247 to 269, 270 to 292, and 293 to 316; these read DDAT…LKTK, VKVQ…INLP, RSLR…SLAR, PLLE…AFAD, SKQL…SGLP, HTLE…AFKG, NSLR…TFSR, LQNL…NLPS, AHLQ…TLAK, and MREL…LFDD. An N-linked (GlcNAc...) asparagine glycan is attached at asparagine 305. The region spanning 328–379 is the LRRCT domain; it reads NPWFCGCNLMWLRDWVRARAAVVNVRGLMCQGPEKVRGMAIKDITSEMDECF. A disulfide bridge links cysteine 332 with cysteine 357. The Fibronectin type-III domain maps to 437-532; that stretch reads KTLVIQVKPL…VCAKAETADS (96 aa). A helical transmembrane segment spans residues 553–573; it reads LAGIIGGAVALVFLFLVLGAI. Residues 574–674 lie on the Cytoplasmic side of the membrane; that stretch reads CWYVHRAGEL…GIPDVDYSYT (101 aa). 3 positions are modified to phosphotyrosine: tyrosine 600, tyrosine 633, and tyrosine 671.

As to quaternary structure, interacts with FGFR1. Interacts (via extracellular domain) with ADGRL1/LPHN1 and ADGRL3 (via olfactomedin-like domain). Post-translationally, phosphorylated in response to FGFR1 signaling, but is not a direct substrate of FGFR1 or SRC. A mutant where the Tyr phosphorylation sites have been replaced by Phe displays constitutive FGFR1-dependent activation of downstream MAP kinases. In terms of processing, N-glycosylated. Proteolytic cleavage in the juxtamembrane region gives rise to a soluble ectodomain. As to expression, detected in brain (at protein level).

It localises to the cell membrane. It is found in the endoplasmic reticulum membrane. Its subcellular location is the cytoplasmic vesicle membrane. The protein resides in the cytoplasm. The protein localises to the perinuclear region. It localises to the cell junction. It is found in the focal adhesion. Its subcellular location is the secreted. The protein resides in the cell projection. The protein localises to the neuron projection. In terms of biological role, plays a role in fibroblast growth factor-mediated signaling cascades that lead to the activation of MAP kinases. Promotes neurite outgrowth via FGFR1-mediated activation of downstream MAP kinases. Promotes an increase both in neurite number and in neurite length. May play a role in cell-cell adhesion and cell guidance via its interaction with ADGRL1/LPHN1 and ADGRL3. The protein is Leucine-rich repeat transmembrane protein FLRT1 of Mus musculus (Mouse).